Consider the following 96-residue polypeptide: Methanol dehydrogenase [cytochrome c] subunit 2 (96 aa).

Positions 1-22 (MKTTLIAAAIVALSGLAAPALA) are cleaved as a signal peptide. Cys-28 and Cys-34 are disulfide-bonded. The segment at 45 to 75 (IAGSKYDPKHDPKELNKQADSIKQMEERNKK) is disordered. A compositionally biased stretch (basic and acidic residues) spans 50 to 61 (YDPKHDPKELNK).

It belongs to the methanol dehydrogenase subunit 2 family. As to quaternary structure, heterotetramer composed of 2 alpha and 2 beta subunits.

It is found in the periplasm. It catalyses the reaction 2 Fe(III)-[cytochrome cL] + a primary alcohol = 2 Fe(II)-[cytochrome cL] + an aldehyde + 2 H(+). Its function is as follows. Catalyzes the oxidation of primary alcohols including methanol. The protein is Methanol dehydrogenase [cytochrome c] subunit 2 (moxI) of Methylorubrum extorquens (strain ATCC 14718 / DSM 1338 / JCM 2805 / NCIMB 9133 / AM1) (Methylobacterium extorquens).